A 183-amino-acid chain; its full sequence is RNA 2',3'-cyclic phosphodiesterase (183 aa).

H44 serves as the catalytic Proton donor. Short sequence motifs (HXTX) lie at residues 44-47 (HITL) and 130-133 (HMTL). H130 functions as the Proton acceptor in the catalytic mechanism.

Belongs to the 2H phosphoesterase superfamily. ThpR family.

The catalysed reaction is a 3'-end 2',3'-cyclophospho-ribonucleotide-RNA + H2O = a 3'-end 2'-phospho-ribonucleotide-RNA + H(+). Hydrolyzes RNA 2',3'-cyclic phosphodiester to an RNA 2'-phosphomonoester. The polypeptide is RNA 2',3'-cyclic phosphodiesterase (ytlP) (Bacillus subtilis (strain 168)).